A 76-amino-acid chain; its full sequence is UPF0154 protein LCA_1273 (76 aa).

The helical transmembrane segment at 3 to 23 (IGIGVLIFVIGALLGAVAGFF) threads the bilayer. The interval 55-76 (PSEKKLNQMMSSMKAQQKRSKK) is disordered.

It belongs to the UPF0154 family.

It localises to the cell membrane. In Latilactobacillus sakei subsp. sakei (strain 23K) (Lactobacillus sakei subsp. sakei), this protein is UPF0154 protein LCA_1273.